Reading from the N-terminus, the 308-residue chain is Ornithine carbamoyltransferase (308 aa).

Carbamoyl phosphate contacts are provided by residues 57 to 60 (STRT), Q84, R108, and 135 to 138 (HPCQ). Residues N166, D224, and 228-229 (SM) contribute to the L-ornithine site. Residues 264–265 (CL) and R292 contribute to the carbamoyl phosphate site.

The protein belongs to the aspartate/ornithine carbamoyltransferase superfamily. OTCase family.

It is found in the cytoplasm. It catalyses the reaction carbamoyl phosphate + L-ornithine = L-citrulline + phosphate + H(+). It functions in the pathway amino-acid biosynthesis; L-arginine biosynthesis; L-arginine from L-ornithine and carbamoyl phosphate: step 1/3. Reversibly catalyzes the transfer of the carbamoyl group from carbamoyl phosphate (CP) to the N(epsilon) atom of ornithine (ORN) to produce L-citrulline. This chain is Ornithine carbamoyltransferase, found in Ralstonia nicotianae (strain ATCC BAA-1114 / GMI1000) (Ralstonia solanacearum).